The sequence spans 384 residues: ATP phosphoribosyltransferase regulatory subunit (384 aa).

Belongs to the class-II aminoacyl-tRNA synthetase family. HisZ subfamily. In terms of assembly, heteromultimer composed of HisG and HisZ subunits.

It localises to the cytoplasm. It functions in the pathway amino-acid biosynthesis; L-histidine biosynthesis; L-histidine from 5-phospho-alpha-D-ribose 1-diphosphate: step 1/9. In terms of biological role, required for the first step of histidine biosynthesis. May allow the feedback regulation of ATP phosphoribosyltransferase activity by histidine. The polypeptide is ATP phosphoribosyltransferase regulatory subunit (Paracidovorax citrulli (strain AAC00-1) (Acidovorax citrulli)).